The following is a 380-amino-acid chain: Putative 8-amino-7-oxononanoate synthase (380 aa).

A substrate-binding site is contributed by arginine 18. 106 to 107 (GY) is a pyridoxal 5'-phosphate binding site. Substrate is bound at residue histidine 131. Residues serine 179, 205–208 (DEAH), and 236–239 (TFGK) contribute to the pyridoxal 5'-phosphate site. Lysine 239 is modified (N6-(pyridoxal phosphate)lysine). Position 352 (threonine 352) interacts with substrate.

This sequence belongs to the class-II pyridoxal-phosphate-dependent aminotransferase family. BioF subfamily. In terms of assembly, homodimer. Requires pyridoxal 5'-phosphate as cofactor.

The catalysed reaction is 6-carboxyhexanoyl-[ACP] + L-alanine + H(+) = (8S)-8-amino-7-oxononanoate + holo-[ACP] + CO2. The protein operates within cofactor biosynthesis; biotin biosynthesis. Functionally, catalyzes the decarboxylative condensation of pimeloyl-[acyl-carrier protein] and L-alanine to produce 8-amino-7-oxononanoate (AON), [acyl-carrier protein], and carbon dioxide. The chain is Putative 8-amino-7-oxononanoate synthase (bioF) from Neisseria meningitidis serogroup C / serotype 2a (strain ATCC 700532 / DSM 15464 / FAM18).